The following is a 389-amino-acid chain: Tyrosine aminotransferase (389 aa).

At Lys-242 the chain carries N6-(pyridoxal phosphate)lysine.

It belongs to the class-I pyridoxal-phosphate-dependent aminotransferase family. Homodimer. Pyridoxal 5'-phosphate serves as cofactor.

The enzyme catalyses L-tyrosine + 2-oxoglutarate = 3-(4-hydroxyphenyl)pyruvate + L-glutamate. Its pathway is amino-acid degradation; L-phenylalanine degradation; acetoacetate and fumarate from L-phenylalanine: step 2/6. Transaminase involved in tyrosine breakdown. Converts tyrosine to p-hydroxyphenylpyruvate. In Rhizobium meliloti (strain 1021) (Ensifer meliloti), this protein is Tyrosine aminotransferase (tatA).